A 125-amino-acid polypeptide reads, in one-letter code: Multifunctional methyltransferase subunit TRM112-like protein (125 aa).

In terms of domain architecture, TRM112 spans Lys-2–Asn-119.

It belongs to the TRM112 family. Part of the heterodimeric BUD23-TRM112 methyltransferase complex; this heterodimerization is necessary for the metabolic stability and activity of the catalytic subunit BUD23. Part of the heterodimeric N6AMT1-TRM112 methyltransferase complex; this heterodimerization is necessary for S-adenosyl-L-methionine-binding to N6AMT1/HEMK2. Part of the heterodimeric ALKBH8-TRM112 methyltransferase complex. Part of the heterodimeric METTL5-TRM112 methyltransferase complex; this heterodimerization is necessary for the stability of the catalytic subunit METTL5. Part of the heterodimeric THUMPD3-TRM112 methyltransferase complex; this complex forms an active tRNA methyltransferase, where TRMT112 acts as an activator of the catalytic subunit THUMPD3. Part of the heterodimeric THUMPD2-TRM112 methyltransferase complex; this complex forms an active tRNA methyltransferase, where TRMT112 acts as an activator of the catalytic subunit THUMPD2. Part of the heterodimeric TRMT11-TRM112 methyltransferase complex; this complex forms an active tRNA methyltransferase, where TRMT112 acts as an activator of the catalytic subunit TRMT11. Abundantly expressed in the testis, also expressed in the brain, heart, kidney, liver, lung, muscle and spleen.

It is found in the nucleus. The protein localises to the nucleoplasm. The protein resides in the cytoplasm. Its subcellular location is the perinuclear region. Acts as an activator of both rRNA/tRNA and protein methyltransferases. Together with methyltransferase BUD23, methylates the N(7) position of a guanine in 18S rRNA. The heterodimer with HEMK2/N6AMT1 catalyzes N5-methylation of ETF1 on 'Gln-185', using S-adenosyl L-methionine as methyl donor. The heterodimer with ALKBH8 catalyzes the methylation of 5-carboxymethyl uridine to 5-methylcarboxymethyl uridine at the wobble position of the anticodon loop in target tRNA species. Together with methyltransferase THUMPD3, catalyzes the formation of N(2)-methylguanosine at position 6 in a broad range of tRNA substrates and at position 7 of tRNA(Trp). Involved in the pre-rRNA processing steps leading to small-subunit rRNA production. Together with methyltransferase METTL5, specifically methylates the 6th position of adenine in position 1832 of 18S rRNA. In Mus musculus (Mouse), this protein is Multifunctional methyltransferase subunit TRM112-like protein (Trmt112).